The chain runs to 1009 residues: Protein-tyrosine kinase 2-beta (1009 aa).

In terms of domain architecture, FERM spans 39–359 (RILKVCFYSN…GYCRLQGEHK (321 aa)). Residues Ser361, Ser375, and Ser399 each carry the phosphoserine modification. Position 402 is a phosphotyrosine; by autocatalysis (Tyr402). The Protein kinase domain occupies 425–683 (VVLNRILGEG…ELVCSLSDIY (259 aa)). ATP-binding positions include 431-439 (LGEGFFGEV), Lys457, and 503-509 (ELYPYGE). The active-site Proton acceptor is Asp549. Tyr579 carries the phosphotyrosine modification. Tyr580 is modified (phosphotyrosine; by SRC, FYN and LCK). The disordered stretch occupies residues 696-728 (NARYRPPKILEPTTFQEPPPKPSRPKYRPPPQT). Over residues 712–727 (EPPPKPSRPKYRPPPQ) the composition is skewed to pro residues. A Phosphotyrosine modification is found at Tyr722. At Ser762 the chain carries Phosphoserine. Thr765 carries the phosphothreonine modification. The tract at residues 801 to 1009 (KIKMKQVLER…VANLAHPPAE (209 aa)) is interaction with TGFB1I1. The residue at position 834 (Tyr834) is a Phosphotyrosine. Ser839 is modified (phosphoserine). Thr842 is modified (phosphothreonine). Residue Tyr849 is modified to Phosphotyrosine. At Ser866 the chain carries Phosphoserine. The segment at 868-1009 (QPTANLDRTD…VANLAHPPAE (142 aa)) is focal adhesion targeting (FAT). Tyr881 is modified (phosphotyrosine).

The protein belongs to the protein kinase superfamily. Tyr protein kinase family. FAK subfamily. Homodimer, or homooligomer. Interacts with KCNA2. Interacts with NPHP1, ASAP1, ASAP2, ARHGAP26, SKAP2 and TGFB1I1. The Tyr-402 phosphorylated form interacts with SRC (via SH2 domain) and SRC family members. Forms a signaling complex with EPHA1, LCK and phosphatidylinositol 3-kinase; upon activation by EFNA1. Interacts with GRB2 (via SH2 domain). Interacts with P53/TP53 and MDM2. Interacts with MYLK. Interacts with BCAR1. Interacts with RB1CC1. Interacts with RHOU. Interacts with VAV1. Interacts with PDPK1. Interacts with DLG4. Interacts with LPXN and PTPN12. Interacts with SIRPA and SH2D3C. Interacts (hypophosphorylated) with PXN. Interacts with ARHGAP10. Post-translationally, phosphorylated on tyrosine residues in response to various stimuli that elevate the intracellular calcium concentration; this activation is indirect and may be mediated by production of reactive oxygen species (ROS). Tyr-402 is the major autophosphorylation site, but other kinases can also phosphorylate Tyr-402. Autophosphorylation occurs in trans, i.e. one subunit of the dimeric receptor phosphorylates tyrosine residues on the other subunit. Phosphorylation at Tyr-402 promotes interaction with SRC and SRC family members, leading to phosphorylation at Tyr-579; Tyr-580 and Tyr-881. Phosphorylation at Tyr-881 is important for interaction with GRB2. Phosphorylated on tyrosine residues upon activation of FGR and PKC. Recruitment by NPHP1 to cell matrix adhesions initiates Tyr-402 phosphorylation. In monocytes, adherence to substrata is required for tyrosine phosphorylation and kinase activation. Angiotensin II, thapsigargin and L-alpha-lysophosphatidic acid (LPA) also induce autophosphorylation and increase kinase activity. Phosphorylation by MYLK promotes ITGB2 activation and is thus essential to trigger neutrophil transmigration during lung injury. Dephosphorylated by PTPN12.

Its subcellular location is the cytoplasm. The protein resides in the perinuclear region. It is found in the cell membrane. The protein localises to the cell junction. It localises to the focal adhesion. Its subcellular location is the cell projection. The protein resides in the lamellipodium. It is found in the cell cortex. The protein localises to the nucleus. The enzyme catalyses L-tyrosyl-[protein] + ATP = O-phospho-L-tyrosyl-[protein] + ADP + H(+). Activated in response to stimuli that lead to increased intracellular Ca(2+) levels; this activation is indirect and may be mediated by calcium-mediated production of reactive oxygen species (ROS). Activated by autophosphorylation at Tyr-402; this creates a binding site for SRC family kinases and leads to phosphorylation at additional tyrosine residues. Phosphorylation at Tyr-402, Tyr-579 and Tyr-580 is required for optimal kinase activity. Functionally, non-receptor protein-tyrosine kinase that regulates reorganization of the actin cytoskeleton, cell polarization, cell migration, adhesion, spreading and bone remodeling. Plays a role in the regulation of the humoral immune response, and is required for normal levels of marginal B-cells in the spleen and normal migration of splenic B-cells. Required for normal macrophage polarization and migration towards sites of inflammation. Regulates cytoskeleton rearrangement and cell spreading in T-cells, and contributes to the regulation of T-cell responses. Promotes osteoclastic bone resorption; this requires both PTK2B/PYK2 and SRC. May inhibit differentiation and activity of osteoprogenitor cells. Functions in signaling downstream of integrin and collagen receptors, immune receptors, G-protein coupled receptors (GPCR), cytokine, chemokine and growth factor receptors, and mediates responses to cellular stress. Forms multisubunit signaling complexes with SRC and SRC family members upon activation; this leads to the phosphorylation of additional tyrosine residues, creating binding sites for scaffold proteins, effectors and substrates. Regulates numerous signaling pathways. Promotes activation of phosphatidylinositol 3-kinase and of the AKT1 signaling cascade. Promotes activation of NOS3. Regulates production of the cellular messenger cGMP. Promotes activation of the MAP kinase signaling cascade, including activation of MAPK1/ERK2, MAPK3/ERK1 and MAPK8/JNK1. Promotes activation of Rho family GTPases, such as RHOA and RAC1. Recruits the ubiquitin ligase MDM2 to P53/TP53 in the nucleus, and thereby regulates P53/TP53 activity, P53/TP53 ubiquitination and proteasomal degradation. Acts as a scaffold, binding to both PDPK1 and SRC, thereby allowing SRC to phosphorylate PDPK1 at 'Tyr-9, 'Tyr-373', and 'Tyr-376'. Promotes phosphorylation of NMDA receptors by SRC family members, and thereby contributes to the regulation of NMDA receptor ion channel activity and intracellular Ca(2+) levels. May also regulate potassium ion transport by phosphorylation of potassium channel subunits. Phosphorylates SRC; this increases SRC kinase activity. Phosphorylates ASAP1, NPHP1, KCNA2 and SHC1. Promotes phosphorylation of ASAP2, RHOU and PXN; this requires both SRC and PTK2/PYK2. In Mus musculus (Mouse), this protein is Protein-tyrosine kinase 2-beta (Ptk2b).